The chain runs to 121 residues: Large ribosomal subunit protein bL12 (121 aa).

It belongs to the bacterial ribosomal protein bL12 family. In terms of assembly, homodimer. Part of the ribosomal stalk of the 50S ribosomal subunit. Forms a multimeric L10(L12)X complex, where L10 forms an elongated spine to which 2 to 4 L12 dimers bind in a sequential fashion. Binds GTP-bound translation factors.

Functionally, forms part of the ribosomal stalk which helps the ribosome interact with GTP-bound translation factors. Is thus essential for accurate translation. In Tremblaya princeps, this protein is Large ribosomal subunit protein bL12.